The following is a 379-amino-acid chain: Heterogeneous nuclear ribonucleoprotein A3 (379 aa).

Met-1 bears the N-acetylmethionine mark. The segment covering Met-1 to Pro-10 has biased composition (pro residues). The disordered stretch occupies residues Met-1–Leu-34. Lys-4 participates in a covalent cross-link: Glycyl lysine isopeptide (Lys-Gly) (interchain with G-Cter in SUMO2). Ser-14 is modified (phosphoserine). A compositionally biased stretch (basic and acidic residues) spans Arg-21–Leu-34. The 84-residue stretch at Arg-35–Lys-118 folds into the RRM 1 domain. Residue Lys-36 forms a Glycyl lysine isopeptide (Lys-Gly) (interchain with G-Cter in SUMO2) linkage. Phosphoserine is present on Ser-43. Arg-52 carries the post-translational modification Dimethylated arginine; alternate. Arg-52 is modified (omega-N-methylarginine; alternate). Arg-76 carries the omega-N-methylarginine modification. Phosphoserine occurs at positions 112 and 116. Lys-118 is covalently cross-linked (Glycyl lysine isopeptide (Lys-Gly) (interchain with G-Cter in SUMO2)). Thr-124 carries the phosphothreonine modification. The RRM 2 domain maps to Lys-126–Gln-205. At Lys-134 the chain carries N6-acetyllysine; alternate. Lys-134 is covalently cross-linked (Glycyl lysine isopeptide (Lys-Gly) (interchain with G-Cter in SUMO2); alternate). Residues Lys-151 and Lys-182 each participate in a glycyl lysine isopeptide (Lys-Gly) (interchain with G-Cter in SUMO2) cross-link. Residues Lys-204–Gly-225 form a disordered region. An omega-N-methylarginine; alternate mark is found at Arg-214, Arg-216, Arg-226, Arg-239, and Arg-246. Asymmetric dimethylarginine; alternate occurs at positions 214, 216, 226, 239, and 246. Over residues Arg-214–Gly-225 the composition is skewed to gly residues. Residue Arg-257 is modified to Omega-N-methylarginine. An Asymmetric dimethylarginine modification is found at Arg-286. Residues Asn-335–Phe-379 form a disordered region. Gly residues predominate over residues Met-347–Phe-379. A Phosphoserine modification is found at Ser-351. Arg-355 is subject to Omega-N-methylarginine. Position 359 is a phosphoserine (Ser-359). Residues Tyr-361 and Tyr-365 each carry the phosphotyrosine modification. A phosphoserine mark is found at Ser-367 and Ser-371. Tyr-374 carries the post-translational modification Phosphotyrosine. Ser-376 carries the phosphoserine modification.

Identified in the spliceosome C complex.

Its subcellular location is the nucleus. In terms of biological role, plays a role in cytoplasmic trafficking of RNA. Binds to the cis-acting response element, A2RE. May be involved in pre-mRNA splicing. The polypeptide is Heterogeneous nuclear ribonucleoprotein A3 (Hnrnpa3) (Mus musculus (Mouse)).